We begin with the raw amino-acid sequence, 242 residues long: Transcription factor Spi-C (242 aa).

The ETS DNA-binding region spans 112–195 (LRLFEYLFES…IRRKLTYQFS (84 aa)).

It belongs to the ETS family. Binds DNA as a monomer. As to expression, expressed in lymphoid tissues, including spleen, bone marrow and thymus. According to PubMed:19037245, highly expressed in red pulp macrophages and, at lower, levels in B-cells, but not in other cells, including, monocytes, dendritic cells and other tissue macrophages. According to PubMed:10464163 expressed in pre- and mature B-cells but not in immature B-cells; according to PubMed:10187812 not expressed in pre- but predominantly in mature B-cells and at lower levels in macrophages.

It is found in the nucleus. Its function is as follows. Controls the development of red pulp macrophages required for red blood cells recycling and iron homeostasis. Transcription factor that binds to the PU-box, a purine-rich DNA sequence (5'-GAGGA[AT]-3') that can act as a lymphoid-specific enhancer. Regulates VCAM1 gene expression. The sequence is that of Transcription factor Spi-C (Spic) from Mus musculus (Mouse).